A 441-amino-acid chain; its full sequence is MSEMTPREIVHELDSHIIGQQKAKRSVAIALRNRWRRMQLAADLRQEVTPKNILMIGPTGVGKTEIARRLARLAKAPFIKVEATKFTEVGYVGKEVEQIIRDLTDSAIKLTREEQMAKCKFRAEEAAEERILDALLPKPKEDWDNEKPSDNATRQVFRKKLREGQLDDKEIEIDIAAPQAGIEIMSPPGMEEMTNQLQSMFQNMGPGASKRRKMPIKEAHKLLIEEEAAKLVNADDLKEQAIELVEQHGIVFLDEIDKICKRGESSGPDVSREGVQRDLLPLVEGCTVNTKHGMVKTDHILFIASGAFQMSKPSDLIPELQGRLPIRVELEALSADDFKRILTEPHASLTEQYVALMGTEGVEVEFKDSGIDAIAEAAWQVNERTENIGARRLHTVMERLMEELSYEASDKSGSVTVVDADYVKAHLDNLVQDEDLSRFIL.

Residues Ile18, 60–65, Asp254, Glu319, and Arg391 each bind ATP; that span reads GVGKTE.

This sequence belongs to the ClpX chaperone family. HslU subfamily. A double ring-shaped homohexamer of HslV is capped on each side by a ring-shaped HslU homohexamer. The assembly of the HslU/HslV complex is dependent on binding of ATP.

Its subcellular location is the cytoplasm. Its function is as follows. ATPase subunit of a proteasome-like degradation complex; this subunit has chaperone activity. The binding of ATP and its subsequent hydrolysis by HslU are essential for unfolding of protein substrates subsequently hydrolyzed by HslV. HslU recognizes the N-terminal part of its protein substrates and unfolds these before they are guided to HslV for hydrolysis. The sequence is that of ATP-dependent protease ATPase subunit HslU from Shewanella piezotolerans (strain WP3 / JCM 13877).